The following is a 488-amino-acid chain: MDVGRCFLFLLLPSFFFLPSQTQSTDSFTSVLVSQNGLDFVKNLLVNKAIASIIPLQIPRIEKSMKIPFLGGIDVVVSNLTIYELDVASSYVKLGETGVVIVASGTTCNLSMNWHYSYSTWLPPIEISDQGIASVQVQGMEIGLSLGLKSDEGGLKLSLSECGCHVEDITIELEGGASWFYQGMVNAFKDQIGSSVESTIAKKLTEGVSDLDSFLQSLPKEIPVDDNADLNVTFTSDPILRNSSITFEIDGLFTKGETNQVLKSFFKKSVSLVICPGNSKMLGISVDEAVFNSAAALYYNADFVQWVVDKIPEQSLLNTARWRFIIPQLYKKYPNQDMNLNISLSSPPLVKISEQYVGANVNADLVINVLDANQVIPVACISLMIRGSGALRVMGNNLGGSVSLEDFSMSLKWSNIGNLHLHLLQPIVWTVIQTVFVPYANDHLEKGFPLPIMHGFTLQNAEIICSESEITVCSDVAYLDSSQQPQWL.

Residues 1–24 (MDVGRCFLFLLLPSFFFLPSQTQS) form the signal peptide. Residues Asn-79, Asn-109, Asn-231, Asn-242, and Asn-341 are each glycosylated (N-linked (GlcNAc...) asparagine).

This sequence belongs to the BPI/LBP/Plunc superfamily. BPI/LBP (TC 1.C.40) family.

The protein is Putative BPI/LBP family protein At1g04970 of Arabidopsis thaliana (Mouse-ear cress).